The chain runs to 57 residues: uncharacterized protein (57 aa).

Residues 34 to 54 traverse the membrane as a helical segment; sequence AALLDAAALVVIPGLLTAAAV.

It localises to the membrane. This is an uncharacterized protein from Dictyostelium discoideum (Social amoeba).